A 344-amino-acid chain; its full sequence is Phosphate acyltransferase (344 aa).

This sequence belongs to the PlsX family. As to quaternary structure, homodimer. Probably interacts with PlsY.

It is found in the cytoplasm. The catalysed reaction is a fatty acyl-[ACP] + phosphate = an acyl phosphate + holo-[ACP]. It functions in the pathway lipid metabolism; phospholipid metabolism. Its function is as follows. Catalyzes the reversible formation of acyl-phosphate (acyl-PO(4)) from acyl-[acyl-carrier-protein] (acyl-ACP). This enzyme utilizes acyl-ACP as fatty acyl donor, but not acyl-CoA. This is Phosphate acyltransferase from Yersinia enterocolitica serotype O:8 / biotype 1B (strain NCTC 13174 / 8081).